The sequence spans 157 residues: MASLSTSVVASASSRLWNPAASNGKICVPSASLSLRTGCRRSSSSLTSSASSQLLHCSFLSSPVSLASPFSGLSIAFDLSSQTSGLNGQRRRGLVVRAGKAALCQTKRSRSRKSLARTHGFRRRMRTTSGRATIKRRRAKGRWNLCPKSNPSSGKRA.

Residues 1 to 97 (MASLSTSVVA…GQRRRGLVVR (97 aa)) constitute a chloroplast transit peptide.

It belongs to the bacterial ribosomal protein bL34 family. Part of the 50S ribosomal subunit.

The protein localises to the plastid. The protein resides in the chloroplast. In terms of biological role, this protein binds directly to 23S ribosomal RNA. The sequence is that of Large ribosomal subunit protein bL34c (RPL34) from Arabidopsis thaliana (Mouse-ear cress).